Reading from the N-terminus, the 668-residue chain is Probable tRNA (uracil-O(2)-)-methyltransferase (668 aa).

The disordered stretch occupies residues 441–460; that stretch reads QHTDSLHISTKSSLDKDDPP. The C3H1-type zinc-finger motif lies at 620-649; that stretch reads LKTRLCWFYVHHPNGCPRVAKSCPYAHGAE.

The protein belongs to the TRM44 family.

The protein resides in the cytoplasm. The enzyme catalyses uridine(44) in tRNA(Ser) + S-adenosyl-L-methionine = 2'-O-methyluridine(44) in tRNA(Ser) + S-adenosyl-L-homocysteine + H(+). Functionally, probable adenosyl-L-methionine (AdoMet)-dependent tRNA (uracil-O(2)-)-methyltransferase. The chain is Probable tRNA (uracil-O(2)-)-methyltransferase (trmt44) from Xenopus laevis (African clawed frog).